Here is a 220-residue protein sequence, read N- to C-terminus: Uracil-DNA glycosylase (220 aa).

Catalysis depends on Asp-60, which acts as the Proton acceptor.

Belongs to the uracil-DNA glycosylase (UDG) superfamily. UNG family.

The protein localises to the cytoplasm. The catalysed reaction is Hydrolyzes single-stranded DNA or mismatched double-stranded DNA and polynucleotides, releasing free uracil.. Its function is as follows. Excises uracil residues from the DNA which can arise as a result of misincorporation of dUMP residues by DNA polymerase or due to deamination of cytosine. The sequence is that of Uracil-DNA glycosylase from Francisella tularensis subsp. tularensis (strain FSC 198).